The primary structure comprises 407 residues: Peptidase T (407 aa).

Zn(2+) is bound at residue histidine 81. The active site involves aspartate 83. Aspartate 142 provides a ligand contact to Zn(2+). The active-site Proton acceptor is the glutamate 176. Residues glutamate 177, aspartate 199, and histidine 381 each contribute to the Zn(2+) site.

Belongs to the peptidase M20B family. Zn(2+) serves as cofactor.

It is found in the cytoplasm. It carries out the reaction Release of the N-terminal residue from a tripeptide.. Cleaves the N-terminal amino acid of tripeptides. In Streptococcus pneumoniae (strain Taiwan19F-14), this protein is Peptidase T.